The sequence spans 54 residues: ATP synthase protein 8 (54 aa).

The helical transmembrane segment at 8-28 (WWIINFFIIWTAILLTLVILV) threads the bilayer.

Belongs to the ATPase protein 8 family. F-type ATPases have 2 components, CF(1) - the catalytic core - and CF(0) - the membrane proton channel.

It localises to the mitochondrion membrane. Its function is as follows. Mitochondrial membrane ATP synthase (F(1)F(0) ATP synthase or Complex V) produces ATP from ADP in the presence of a proton gradient across the membrane which is generated by electron transport complexes of the respiratory chain. F-type ATPases consist of two structural domains, F(1) - containing the extramembraneous catalytic core and F(0) - containing the membrane proton channel, linked together by a central stalk and a peripheral stalk. During catalysis, ATP synthesis in the catalytic domain of F(1) is coupled via a rotary mechanism of the central stalk subunits to proton translocation. Part of the complex F(0) domain. Minor subunit located with subunit a in the membrane. In Paracentrotus lividus (Common sea urchin), this protein is ATP synthase protein 8 (MT-ATP8).